The sequence spans 1763 residues: Genome polyprotein (1763 aa).

One can recognise an SF3 helicase domain in the interval 458 to 614; the sequence is DGVITSCNKR…ESHKRARPGT (157 aa). Residue 484-491 participates in ATP binding; that stretch reads GPPGCGKT. The acidic stretch occupies residues 981 to 986; sequence DDEYDE. Tyrosine 984 is subject to O-(5'-phospho-RNA)-tyrosine. Threonine 1040 is subject to Phosphothreonine. A Phosphoserine modification is found at serine 1067. Residues 1073 to 1229 enclose the Peptidase C24 domain; that stretch reads GPGTKFHKNA…KLVVPYVHID (157 aa). Residues histidine 1110, glutamate 1131, and cysteine 1193 each act as for 3CLpro activity in the active site. Positions 1478-1603 constitute a RdRp catalytic domain; that stretch reads AKVFAVDYSK…MFPIMYASIS (126 aa).

Homodimer. Interacts with NTPase, protein p30 and protease-polymerase p76. In terms of assembly, interacts with capsid protein VP1 and protease-polymerase p76. Interacts with host IEF4e; this interaction plays a role in translation of viral proteins. As to quaternary structure, homooligomer. Interacts with Vpg, protein p32 and may interact with capsid protein VP1. Specific enzymatic cleavages in vivo yield mature proteins. Pro-Pol is first autocatalytically cleaved, then processes the whole polyprotein. Post-translationally, VPg is uridylylated by the polymerase and is covalently attached to the 5'-end of the polyadenylated genomic and subgenomic RNAs. This uridylylated form acts as a nucleotide-peptide primer for the polymerase.

It is found in the host endoplasmic reticulum membrane. The enzyme catalyses a ribonucleoside 5'-triphosphate + H2O = a ribonucleoside 5'-diphosphate + phosphate + H(+). It catalyses the reaction RNA(n) + a ribonucleoside 5'-triphosphate = RNA(n+1) + diphosphate. The catalysed reaction is Endopeptidase with a preference for cleavage when the P1 position is occupied by Glu-|-Xaa and the P1' position is occupied by Gly-|-Yaa.. In terms of biological role, together with NTPase and NS4, initiates the formation of the replication complex. Induces the proliferation of the host smooth ER membranes forming long tubular structures. These remodeled membranes probably form the viral factories that contain the replication complex. Functionally, displays NTPase activity, but no helicase activity. Induces the formation of convoluted membranes derived from the host ER. These remodeled membranes probably form the viral factories that contain the replication complex. Together with NS2 and NS4, initiates the formation of the replication complex. Its function is as follows. Probable key protein responsible for the formation of membrane alterations by the virus. Induces the formation of convoluted membranes derived from the host ER. These remodeled membranes probably form the viral factories that contain the replication complex. Together with NS2 and NTPase, initiates the formation of the replication complex. Viral genome-linked protein is covalently linked to the 5'-end of the positive-strand, negative-strand genomic RNAs and subgenomic RNA. Acts as a genome-linked replication primer. May recruit ribosome to viral RNA thereby promoting viral proteins translation. Interacts with host translation initiation complex to allow the translation of viral proteins. In terms of biological role, protease-polymerase p76 processes the polyprotein: Pro-Pol is first released by autocleavage, then all other proteins are cleaved. Cleaves host translation initiation factor eIF4G1, eIF4G2 and PABP1 thereby inducing a shutdown of host protein synthesis. This shutdown may not prevent viral mRNA from being translated since viral Vpg replaces the cap. It is also an RNA-directed RNA polymerase which replicates genomic and antigenomic viral RNA by recognizing specific signals. Also transcribes a subgenomic mRNA by initiating RNA synthesis internally on antigenomic RNA. This sgRNA codes for structural proteins. Catalyzes the covalent attachment VPg with viral RNAs. Cleaves host G3BP1 thereby preventing the assembly of host stress granules. The chain is Genome polyprotein from Felidae (cat family).